The sequence spans 474 residues: Sugar transporter ERD6-like 17 (474 aa).

Transmembrane regions (helical) follow at residues 27–47 (ITAC…SFGV), 76–96 (FATL…MVIG), 106–126 (FLCI…LLNF), 129–149 (IISG…IAEI), 159–180 (TFSN…GNFI), 184–204 (TLAL…FFVP), 266–286 (TLVV…AAVI), 302–322 (IGTT…LILV), 329–349 (PLLM…GVAF), 363–383 (ILSF…LGGL), 403–423 (IVTL…NFLF), and 429–449 (GTFF…WLLV).

It belongs to the major facilitator superfamily. Sugar transporter (TC 2.A.1.1) family. In terms of tissue distribution, expressed in young seedlings.

It localises to the membrane. Sugar transporter. This is Sugar transporter ERD6-like 17 from Arabidopsis thaliana (Mouse-ear cress).